The primary structure comprises 271 residues: Endonuclease V (271 aa).

The interval 46–67 (TRTGDAPDVDQTTLSTSADDRT) is disordered. Mg(2+)-binding residues include aspartate 76 and aspartate 140.

This sequence belongs to the endonuclease V family. The cofactor is Mg(2+).

It is found in the cytoplasm. It catalyses the reaction Endonucleolytic cleavage at apurinic or apyrimidinic sites to products with a 5'-phosphate.. Its function is as follows. DNA repair enzyme involved in the repair of deaminated bases. Selectively cleaves double-stranded DNA at the second phosphodiester bond 3' to a deoxyinosine leaving behind the intact lesion on the nicked DNA. This is Endonuclease V from Haloarcula marismortui (strain ATCC 43049 / DSM 3752 / JCM 8966 / VKM B-1809) (Halobacterium marismortui).